Reading from the N-terminus, the 119-residue chain is Phytosulfokines 2 (119 aa).

The first 34 residues, 1-34, serve as a signal peptide directing secretion; the sequence is MSTTRGVSSSSAAAALALLLLFALCFFSFHSAAA. The propeptide occupies 35–109; the sequence is ARAVPRDEHQ…RRLLSDAHLD (75 aa). Residues tyrosine 110 and tyrosine 112 each carry the sulfotyrosine modification. Positions 115-119 are excised as a propeptide; sequence HKNKP.

The protein belongs to the phytosulfokine family. Sulfation is important for activity and for the binding to a putative membrane receptor. In terms of processing, PSK-alpha is produced by endopeptidase digestion. PSK-beta is produced from PSK-alpha by exopeptidase digestion.

Its subcellular location is the secreted. Promotes plant cell differentiation, organogenesis and somatic embryogenesis as well as cell proliferation. The chain is Phytosulfokines 2 (PSK2) from Oryza sativa subsp. indica (Rice).